The following is a 305-amino-acid chain: Translation initiation factor eIF2B subunit alpha (305 aa).

Lys-35 is subject to N6-acetyllysine.

This sequence belongs to the eIF-2B alpha/beta/delta subunits family. In terms of assembly, component of the translation initiation factor 2B (eIF2B) complex which is a heterodecamer of two sets of five different subunits: alpha, beta, gamma, delta and epsilon. Subunits alpha, beta and delta comprise a regulatory subcomplex and subunits epsilon and gamma comprise a catalytic subcomplex. Within the complex, the hexameric regulatory complex resides at the center, with the two heterodimeric catalytic subcomplexes bound on opposite sides.

Its subcellular location is the cytoplasm. It is found in the cytosol. With respect to regulation, activated by the chemical integrated stress response (ISR) inhibitor ISRIB which stimulates guanine nucleotide exchange factor activity for both phosphorylated and unphosphorylated eIF2. Acts as a component of the translation initiation factor 2B (eIF2B) complex, which catalyzes the exchange of GDP for GTP on eukaryotic initiation factor 2 (eIF2) gamma subunit. Its guanine nucleotide exchange factor activity is repressed when bound to eIF2 complex phosphorylated on the alpha subunit, thereby limiting the amount of methionyl-initiator methionine tRNA available to the ribosome and consequently global translation is repressed. This Macaca fascicularis (Crab-eating macaque) protein is Translation initiation factor eIF2B subunit alpha (EIF2B1).